The sequence spans 148 residues: Large ribosomal subunit protein bL9 (148 aa).

Belongs to the bacterial ribosomal protein bL9 family.

Binds to the 23S rRNA. This Salinispora arenicola (strain CNS-205) protein is Large ribosomal subunit protein bL9.